The sequence spans 801 residues: Glycerol-3-phosphate acyltransferase 2, mitochondrial (801 aa).

Residues 1 to 24 (MDTMLKSNPQTQQRSNHNGQETSL) form a disordered region. Residues 1 to 305 (MDTMLKSNPQ…PGPRLSALGQ (305 aa)) lie on the Cytoplasmic side of the membrane. An acyltransferase region spans residues 180-290 (QLHKGQMKMV…SGQPLLIFLE (111 aa)). Positions 205–210 (HKSLLD) match the HXXXXD motif motif. Residues 306–332 (AWLGVVIQAVQAGIISDATLVPVAIAY) form a helical membrane-spanning segment. The Mitochondrial intermembrane portion of the chain corresponds to 333–449 (DLVPDAPCNM…QLLVRRLSRH (117 aa)). A helical membrane pass occupies residues 450 to 472 (VLSASVASSAVMSTAIMATLLLL). The Cytoplasmic segment spans residues 473–801 (KHQKGVVLSQ…EQFIRQFICS (329 aa)). The residue at position 662 (Ser-662) is a Phosphoserine. The residue at position 666 (Thr-666) is a Phosphothreonine. 2 positions are modified to phosphoserine: Ser-668 and Ser-670.

This sequence belongs to the GPAT/DAPAT family. In terms of assembly, interacts with PIWIL2. As to expression, highly expressed in the testis. Expressed at lower levels in the heart, liver, kidney, spleen and adipose cells. Only detected in primary spermatocytes.

It is found in the mitochondrion outer membrane. It carries out the reaction sn-glycerol 3-phosphate + an acyl-CoA = a 1-acyl-sn-glycero-3-phosphate + CoA. It catalyses the reaction a 1-acyl-sn-glycero-3-phosphate + an acyl-CoA = a 1,2-diacyl-sn-glycero-3-phosphate + CoA. The enzyme catalyses 1-(9Z-octadecenoyl)-sn-glycero-3-phosphate + (9Z)-octadecenoyl-CoA = 1,2-di-(9Z-octadecenoyl)-sn-glycero-3-phosphate + CoA. The catalysed reaction is 1-(9Z-octadecenoyl)-sn-glycero-3-phosphate + (5Z,8Z,11Z,14Z)-eicosatetraenoyl-CoA = 1-(9Z)-octadecenoyl-2-(5Z,8Z,11Z,14Z)-eicosatetraenoyl-sn-glycero-3-phosphate + CoA. It carries out the reaction (5Z,8Z,11Z,14Z)-eicosatetraenoyl-CoA + sn-glycerol 3-phosphate = 1-(5Z,8Z,11Z,14Z-eicosatetraenoyl)-sn-glycero-3-phosphate + CoA. It functions in the pathway phospholipid metabolism; CDP-diacylglycerol biosynthesis; CDP-diacylglycerol from sn-glycerol 3-phosphate: step 1/3. With respect to regulation, inhibited by N-ethylmaleimide (NEM). In terms of biological role, transfers an acyl-group from acyl-ACP to the sn-1 position of glycerol-3-phosphate producing a lysophosphatidic acid (LPA), an essential step for the triacylglycerol (TAG) and glycerophospholipids. In vitro also transfers an acyl-group from acyl-ACP to the LPA producing a phosphatidic acid (PA). Prefers arachidonoyl-CoA as the acyl donor. Required for primary processing step during piRNA biosynthesis. Molecular mechanisms by which it promotes piRNA biosynthesis are unclear and do not involve its acyltransferase activity. In Mus musculus (Mouse), this protein is Glycerol-3-phosphate acyltransferase 2, mitochondrial.